We begin with the raw amino-acid sequence, 101 residues long: Urease subunit beta (101 aa).

This sequence belongs to the urease beta subunit family. As to quaternary structure, heterotrimer of UreA (gamma), UreB (beta) and UreC (alpha) subunits. Three heterotrimers associate to form the active enzyme.

The protein localises to the cytoplasm. The enzyme catalyses urea + 2 H2O + H(+) = hydrogencarbonate + 2 NH4(+). It functions in the pathway nitrogen metabolism; urea degradation; CO(2) and NH(3) from urea (urease route): step 1/1. This chain is Urease subunit beta, found in Burkholderia ambifaria (strain ATCC BAA-244 / DSM 16087 / CCUG 44356 / LMG 19182 / AMMD) (Burkholderia cepacia (strain AMMD)).